The following is a 135-amino-acid chain: uncharacterized protein (135 aa).

In terms of domain architecture, HTH hxlR-type spans 25–123 (CPIQHVVDLL…LGSDWLEQES (99 aa)).

This is an uncharacterized protein from Synechocystis sp. (strain ATCC 27184 / PCC 6803 / Kazusa).